Reading from the N-terminus, the 352-residue chain is Nicotinate-nucleotide--dimethylbenzimidazole phosphoribosyltransferase (352 aa).

Catalysis depends on glutamate 316, which acts as the Proton acceptor.

The protein belongs to the CobT family.

The enzyme catalyses 5,6-dimethylbenzimidazole + nicotinate beta-D-ribonucleotide = alpha-ribazole 5'-phosphate + nicotinate + H(+). Its pathway is nucleoside biosynthesis; alpha-ribazole biosynthesis; alpha-ribazole from 5,6-dimethylbenzimidazole: step 1/2. In terms of biological role, catalyzes the synthesis of alpha-ribazole-5'-phosphate from nicotinate mononucleotide (NAMN) and 5,6-dimethylbenzimidazole (DMB). The chain is Nicotinate-nucleotide--dimethylbenzimidazole phosphoribosyltransferase from Clostridium acetobutylicum (strain ATCC 824 / DSM 792 / JCM 1419 / IAM 19013 / LMG 5710 / NBRC 13948 / NRRL B-527 / VKM B-1787 / 2291 / W).